Here is a 292-residue protein sequence, read N- to C-terminus: 4-hydroxy-tetrahydrodipicolinate synthase (292 aa).

Threonine 45 contacts pyruvate. Tyrosine 133 serves as the catalytic Proton donor/acceptor. Lysine 161 (schiff-base intermediate with substrate) is an active-site residue. Isoleucine 203 is a pyruvate binding site.

Belongs to the DapA family. As to quaternary structure, homotetramer; dimer of dimers.

Its subcellular location is the cytoplasm. It catalyses the reaction L-aspartate 4-semialdehyde + pyruvate = (2S,4S)-4-hydroxy-2,3,4,5-tetrahydrodipicolinate + H2O + H(+). The protein operates within amino-acid biosynthesis; L-lysine biosynthesis via DAP pathway; (S)-tetrahydrodipicolinate from L-aspartate: step 3/4. Its function is as follows. Catalyzes the condensation of (S)-aspartate-beta-semialdehyde [(S)-ASA] and pyruvate to 4-hydroxy-tetrahydrodipicolinate (HTPA). The chain is 4-hydroxy-tetrahydrodipicolinate synthase from Erwinia tasmaniensis (strain DSM 17950 / CFBP 7177 / CIP 109463 / NCPPB 4357 / Et1/99).